The primary structure comprises 934 residues: Protein unc-45 homolog B (934 aa).

TPR repeat units lie at residues 9–42, 48–81, and 83–115; these read SVQLKEEGNKHFQAGEIDQAIDCYTKAIKTCKKE, AVIYRNRSACFLKKENYSNAASDATKAIDVDAAD, and KALYRRCQAFEKLGKLDMAFKDVQRCATIEPKN. 3 ARM repeats span residues 174–213, 216–255, and 753–792; these read DAGAERIFQNNGVPLLMQLIDTGKPEMILAAIRTLSGMCT, RARATAIIHSVGISKLCSIMAVDNEEIALATANLFQCVND, and DKLRVKILKEKALPEIENYMFEDHEQIRQAATECMCNLVC.

In terms of assembly, interacts with apobec2a, apobec2b, hsp90a.1, hsp90a.2, hsp90ab1 and myosin. Expressed in striated muscle tissue including somites, heart and craniofacial muscle. Detected in mesoderm adjacent to the dorsal midline during the late gastrula stages and in somitic mesoderm during development of trunk skeletal muscle. Also expressed in cranial skeletal muscle and in cardiac and smooth muscle. Detected in somitic muscle and heart primordium of 24 hour embryos. At later stages, expressed in muscles of pectoral fins, jaw, branchial arches and eye.

It is found in the cytoplasm. Its subcellular location is the myofibril. The protein resides in the sarcomere. It localises to the z line. The protein localises to the a band. It is found in the perinuclear region. Functionally, acts as a co-chaperone for HSP90 and is required for proper folding of the myosin motor domain. Plays a role in sarcomere formation during muscle cell development. Required for myoseptal integrity, myofiber attachment, motility and craniofacial development. Is necessary for normal early lens development. The sequence is that of Protein unc-45 homolog B from Danio rerio (Zebrafish).